A 207-amino-acid chain; its full sequence is LexA repressor (207 aa).

Positions 28-48 (VREIGEAVGLASSSTVHGHLS) form a DNA-binding region, H-T-H motif. Catalysis depends on for autocatalytic cleavage activity residues Ser-129 and Lys-167.

It belongs to the peptidase S24 family. As to quaternary structure, homodimer.

The catalysed reaction is Hydrolysis of Ala-|-Gly bond in repressor LexA.. In terms of biological role, represses a number of genes involved in the response to DNA damage (SOS response), including recA and lexA. In the presence of single-stranded DNA, RecA interacts with LexA causing an autocatalytic cleavage which disrupts the DNA-binding part of LexA, leading to derepression of the SOS regulon and eventually DNA repair. In Halalkalibacterium halodurans (strain ATCC BAA-125 / DSM 18197 / FERM 7344 / JCM 9153 / C-125) (Bacillus halodurans), this protein is LexA repressor.